The sequence spans 319 residues: Cobalamin biosynthesis protein CobD (319 aa).

A run of 5 helical transmembrane segments spans residues Val-56–Ala-76, Gly-78–Gly-98, Val-153–Ala-173, Val-204–Cys-224, and Leu-296–Val-316.

Belongs to the CobD/CbiB family.

The protein localises to the cell membrane. Its pathway is cofactor biosynthesis; adenosylcobalamin biosynthesis. In terms of biological role, converts cobyric acid to cobinamide by the addition of aminopropanol on the F carboxylic group. This chain is Cobalamin biosynthesis protein CobD, found in Klebsiella pneumoniae subsp. pneumoniae (strain ATCC 700721 / MGH 78578).